Reading from the N-terminus, the 263-residue chain is Acyl-[acyl-carrier-protein]--UDP-N-acetylglucosamine O-acyltransferase (263 aa).

The protein belongs to the transferase hexapeptide repeat family. LpxA subfamily. As to quaternary structure, homotrimer.

The protein resides in the cytoplasm. It carries out the reaction a (3R)-hydroxyacyl-[ACP] + UDP-N-acetyl-alpha-D-glucosamine = a UDP-3-O-[(3R)-3-hydroxyacyl]-N-acetyl-alpha-D-glucosamine + holo-[ACP]. The protein operates within glycolipid biosynthesis; lipid IV(A) biosynthesis; lipid IV(A) from (3R)-3-hydroxytetradecanoyl-[acyl-carrier-protein] and UDP-N-acetyl-alpha-D-glucosamine: step 1/6. Involved in the biosynthesis of lipid A, a phosphorylated glycolipid that anchors the lipopolysaccharide to the outer membrane of the cell. The polypeptide is Acyl-[acyl-carrier-protein]--UDP-N-acetylglucosamine O-acyltransferase (Stenotrophomonas maltophilia (strain R551-3)).